A 95-amino-acid chain; its full sequence is Aspartyl/glutamyl-tRNA(Asn/Gln) amidotransferase subunit C (95 aa).

It belongs to the GatC family. In terms of assembly, heterotrimer of A, B and C subunits.

It carries out the reaction L-glutamyl-tRNA(Gln) + L-glutamine + ATP + H2O = L-glutaminyl-tRNA(Gln) + L-glutamate + ADP + phosphate + H(+). The catalysed reaction is L-aspartyl-tRNA(Asn) + L-glutamine + ATP + H2O = L-asparaginyl-tRNA(Asn) + L-glutamate + ADP + phosphate + 2 H(+). In terms of biological role, allows the formation of correctly charged Asn-tRNA(Asn) or Gln-tRNA(Gln) through the transamidation of misacylated Asp-tRNA(Asn) or Glu-tRNA(Gln) in organisms which lack either or both of asparaginyl-tRNA or glutaminyl-tRNA synthetases. The reaction takes place in the presence of glutamine and ATP through an activated phospho-Asp-tRNA(Asn) or phospho-Glu-tRNA(Gln). This chain is Aspartyl/glutamyl-tRNA(Asn/Gln) amidotransferase subunit C, found in Thermoanaerobacter pseudethanolicus (strain ATCC 33223 / 39E) (Clostridium thermohydrosulfuricum).